Consider the following 1024-residue polypeptide: MTTITTAQIKSTLQSAKQSAANKLHSAGQSTKDALKKAAEQTRNAGNRLILLIPKDYKGQGSSLNDLVRTADELGIEVQYDEKNGTAITKQVFGTAEKLIGLTERGVTIFAPQLDKLLQKYQKAGNILGGGAENIGDNLGKAGGILSTFQNFLGTALSSMKIDELIKKQKSGGNVSSSELAKASIELINQLVDTVASLNNNVNSFSQQLNTLGSVLSNTKHLNGVGNKLQNLPNLDNIGAGLDTVSGILSAISASFILSNADADTRTKAAAGVELTTKVLGNVGKGISQYIIAQRAAQGLSTSAAAAGLIASAVTLAISPLSFLSIADKFKRANKIEEYSQRFKKLGYDGDSLLAAFHKETGAIDASLTTISTVLASVSSGISAAATTSLVGAPVSALVGAVTGIISGILEASKQAMFEHVASKMADVIAEWEKKHGKNYFENGYDARHAAFLEDNFKILSQYNKEYSVERSVLITQQHWDTLIGELAGVTRNGDKTLSGKSYIDYYEEGKRLEKKXDEFQKQVFDPLKGNIDLSDSKSSTLLKFVTPLLTPGEEIRERRQSGKYEYITELLVKGVDKWTVKGVQDKGAVYDYSNLIQHASVGNNQYREIRIESHLGDGDDKVFLSAGSANIYAGKGHDVVYYDKTDTGYLTIDGTKATEAGNYTVTRVLGGDVKVLQEVVKEQEVSVGKRTEKTQYRSYEFTHINGKNLTETDNLYSVEELIGTTRADKFFGSKFTDIFHGADGDDLIEGNDGNDRLYGDKGNDTLSGGNGDDQLYGGDGNDKLIGVAGNNYLNGGDGDDEFQVQGNSLAKNVLFGGKGNDKLYGSEGADLLDGGEGDDLLKGGYGNDIYRYLSGYGHHIIDDDGGKEDKLSLADIDFRDVAFKREGNDLIMYKGEGNVLSIGHKNGITFRNWFEKESGDISNHEIEQIFDKSGRIITPDSLKKALEYQQRNNKASYVYGNDALAYGSQGDLNPLINEISKIISAAGSFDVKEERTAASLLQLSGNASDFSYGRNSITLTTSA.

The span at 20 to 32 (AANKLHSAGQSTK) shows a compositional bias: polar residues. The disordered stretch occupies residues 20-39 (AANKLHSAGQSTKDALKKAA). 3 helical membrane-spanning segments follow: residues 238–260 (IGAG…ILSN), 268–327 (KAAA…LSIA), and 365–411 (DASL…GILE). Residues Lys564 and Lys690 are each lipidated (N6-myristoyl lysine). Hemolysin-type calcium-binding repeat units follow at residues 732–749 (FGSK…DDLI), 750–767 (EGND…NDTL), 768–785 (SGGN…NDKL), 786–803 (IGVA…DDEF), 816–833 (FGGK…ADLL), and 834–851 (DGGE…NDIY).

This sequence belongs to the RTX prokaryotic toxin (TC 1.C.11) family. Post-translationally, myristoylated by HlyC; the toxin only becomes active when modified. Mainly myristoylated, while a minor fraction is acylated with pentadecanoyl (C15:0; 26%) and heptadecanoyl (C17:0; 6%) fatty acyl groups. Fatty acylation is involved in binding to host membranes and promotes the irreversible insertion of Hemolysin into the host cell membrane. Can be activated by both myristoylation and palmitoylation, but HlyC catalyzes lysine myristoylation.

Its subcellular location is the secreted. The protein resides in the host cell membrane. Bacterial hemolysins are exotoxins that attack blood cell membranes and cause cell rupture by forming a pore. The polypeptide is Hemolysin, plasmid (Escherichia coli).